The following is a 210-amino-acid chain: Chaperone protein TorD (210 aa).

This sequence belongs to the TorD/DmsD family. TorD subfamily.

Its subcellular location is the cytoplasm. Involved in the biogenesis of TorA. Acts on TorA before the insertion of the molybdenum cofactor and, as a result, probably favors a conformation of the apoenzyme that is competent for acquiring the cofactor. The chain is Chaperone protein TorD from Salmonella arizonae (strain ATCC BAA-731 / CDC346-86 / RSK2980).